Reading from the N-terminus, the 335-residue chain is Polyprenol dehydrogenase (335 aa).

NAD(+) contacts are provided by I55, Y208, K212, and T245. Y208 serves as the catalytic Proton acceptor.

It belongs to the short-chain dehydrogenases/reductases (SDR) family.

The protein resides in the lipid droplet. Its subcellular location is the secreted. The catalysed reaction is a di-trans,poly-cis-polyprenol + NAD(+) = a di-trans,poly-cis-polyprenal + NADH + H(+). It catalyses the reaction a di-trans,poly-cis-polyprenol + NADP(+) = a di-trans,poly-cis-polyprenal + NADPH + H(+). It carries out the reaction a di-trans,poly-cis-dolichol + NADP(+) = a di-trans,poly-cis-dolichal + NADPH + H(+). The enzyme catalyses a di-trans,poly-cis-dolichol + NAD(+) = a di-trans,poly-cis-dolichal + NADH + H(+). It participates in protein modification; protein glycosylation. In terms of biological role, oxidoreductase that plays a key role in early steps of protein N-linked glycosylation by mediating two non-consecutive steps in dolichol biosynthesis. Acts both as a NAD(+)-dependent dehydrogenase and as a NADPH-dependent reductase during the conversion of polyprenol into dolichol. First catalyzes the NAD(+)-dependent dehydrogenation of polyprenol into polyprenal; polyprenal is then reduced into dolichal by SRD5A3. It then catalyzes the NADPH-dependent reduction of dolichal into dolichol. May also acts as a positive regulator of starvation-induced autophagy. This is Polyprenol dehydrogenase (Dhrsx) from Mus musculus (Mouse).